The primary structure comprises 392 residues: Probable inactive serine/threonine-protein kinase DDB_G0280855 (392 aa).

The Protein kinase domain occupies 46–349 (ITKKTIYACD…IERIIQHPYF (304 aa)). ATP-binding positions include 52–60 (YACDINGTM) and Lys75.

The protein belongs to the protein kinase superfamily. CMGC Ser/Thr protein kinase family. MAP kinase subfamily.

This Dictyostelium discoideum (Social amoeba) protein is Probable inactive serine/threonine-protein kinase DDB_G0280855.